The sequence spans 334 residues: UDP-glucose 4-epimerase (334 aa).

Residues 11–12, 31–36, 50–51, 72–76, Asn91, Thr116, Tyr140, Lys144, and Phe168 each bind NAD(+); these read YI, DNLQKG, DI, and FAANS. Residues Thr116 and Tyr140 each coordinate substrate. The Proton acceptor role is filled by Tyr140. Residues Asn169, 188–189, 205–207, Arg220, and 281–284 contribute to the substrate site; these read HL, AIF, and RSGD.

This sequence belongs to the NAD(P)-dependent epimerase/dehydratase family. As to quaternary structure, homodimer. NAD(+) is required as a cofactor.

It catalyses the reaction UDP-alpha-D-glucose = UDP-alpha-D-galactose. The protein operates within carbohydrate metabolism; galactose metabolism. Its function is as follows. Involved in the metabolism of galactose. Catalyzes the conversion of UDP-galactose (UDP-Gal) to UDP-glucose (UDP-Glc) through a mechanism involving the transient reduction of NAD. The protein is UDP-glucose 4-epimerase (galE) of Halalkalibacterium halodurans (strain ATCC BAA-125 / DSM 18197 / FERM 7344 / JCM 9153 / C-125) (Bacillus halodurans).